The sequence spans 73 residues: Small ribosomal subunit protein bS18c (73 aa).

This sequence belongs to the bacterial ribosomal protein bS18 family. Part of the 30S ribosomal subunit.

It localises to the plastid. Its subcellular location is the chloroplast. The chain is Small ribosomal subunit protein bS18c from Nephroselmis olivacea (Green alga).